A 554-amino-acid chain; its full sequence is 3-(3-hydroxy-phenyl)propionate/3-hydroxycinnamic acid hydroxylase (554 aa).

FAD-binding positions include 17–46 (QVAI…VVEK) and 285–295 (FRIDRVLLAGD).

This sequence belongs to the PheA/TfdB FAD monooxygenase family. The cofactor is FAD.

The catalysed reaction is 3-(3-hydroxyphenyl)propanoate + NADH + O2 + H(+) = 3-(2,3-dihydroxyphenyl)propanoate + NAD(+) + H2O. It catalyses the reaction (2E)-3-(3-hydroxyphenyl)prop-2-enoate + NADH + O2 + H(+) = (2E)-3-(2,3-dihydroxyphenyl)prop-2-enoate + NAD(+) + H2O. Its pathway is aromatic compound metabolism; 3-phenylpropanoate degradation. In terms of biological role, catalyzes the insertion of one atom of molecular oxygen into position 2 of the phenyl ring of 3-(3-hydroxyphenyl)propionate (3-HPP) and hydroxycinnamic acid (3HCI). The protein is 3-(3-hydroxy-phenyl)propionate/3-hydroxycinnamic acid hydroxylase of Shigella sonnei (strain Ss046).